The sequence spans 151 residues: MLAGYYPSPGDLLTRVLATGTFDILHPGHVYFLAQAKALGDELFVIIARDSNVTHKPKPVIPEEQRLEMVDALKAVNKAILGSEKDMFEPLREIKPDIIALGYDQRFDTEILEKELTKRGLPAKVVRIPLSKECPLCSTGTIIKEVLKRYG.

ATP-binding positions include 21-22 (TF), 26-29 (HPGH), and D104.

The protein belongs to the archaeal FAD synthase family. Homodimer. The cofactor is a divalent metal cation.

The enzyme catalyses FMN + ATP + H(+) = FAD + diphosphate. It participates in cofactor biosynthesis; FAD biosynthesis; FAD from FMN: step 1/1. Its function is as follows. Catalyzes the transfer of the AMP portion of ATP to flavin mononucleotide (FMN) to produce flavin adenine dinucleotide (FAD) coenzyme. This Methanosarcina mazei (strain ATCC BAA-159 / DSM 3647 / Goe1 / Go1 / JCM 11833 / OCM 88) (Methanosarcina frisia) protein is FAD synthase.